The sequence spans 627 residues: MRTSAQILPLVKDPERLEARLSEIPPEPGVYFMRDGSDRIIYIGKSRKLRSRVRSYFREGYNKTERIATMAKLVTEIEFIVTDTEAEALALEANLIKQHQPYFNVLLKDDKKYPYVCITWSEDYPRIFITRKRQLGKEKDKYYGPYTDSGLLREILRISKRIFALRQRPQPLFKDRPCLNYDLGRCPGVCQQLISPEEYRKTVQKVAMVFQGRTQELIDILSEQMEKAAEALNFEVAARIRDQIAGLKSLTAEQKVSLPDDTVSRDAIALAADAQHACIQLFQIRAGQLVGRLAFVAESHAEPGAILQRVLEEHYQTAESVEIPAEILVQHELPDAEILADVLTQRKGRKVTIFTPQRQVKAELIEMVERNAQYELQRMQKLGDRNHQATQDLAAILDLPDLPHRIEGYDISHIQGSNAVASQVVFIDGLPAKQNYRHYKIKNPTVTIGHSDDFASLAEVIQRRFRKYAEDPQLSRVGNPDWPDLIMIDGGKGQLSSVVAVLQEMNLLEDLRVISLAKRREEIFLPGESQPLKTDAEQPGVQLLRRLRDEAHRFAVSFHRQQRSDKLKRSRLDEIPGLGHHRQKQLLAHFRSVDYIRQATPAQIAEVPGIGPHLAQAIYDYFHPSHV.

A GIY-YIG domain is found at 26–105; that stretch reads PEPGVYFMRD…IKQHQPYFNV (80 aa). Positions 215–250 constitute a UVR domain; the sequence is QELIDILSEQMEKAAEALNFEVAARIRDQIAGLKSL.

This sequence belongs to the UvrC family. Interacts with UvrB in an incision complex.

The protein localises to the cytoplasm. Functionally, the UvrABC repair system catalyzes the recognition and processing of DNA lesions. UvrC both incises the 5' and 3' sides of the lesion. The N-terminal half is responsible for the 3' incision and the C-terminal half is responsible for the 5' incision. This chain is UvrABC system protein C, found in Trichormus variabilis (strain ATCC 29413 / PCC 7937) (Anabaena variabilis).